The chain runs to 565 residues: DNA primase (565 aa).

A CHC2-type zinc finger spans residues 37 to 61; the sequence is CPFHSETNPSFYVHPGLKIYHCFGC. Residues 248–329 form the Toprim domain; it reads GFFVITEGYF…NVLVATPSPY (82 aa). Mg(2+) contacts are provided by Glu-254, Asp-298, and Asp-300.

This sequence belongs to the DnaG primase family. As to quaternary structure, monomer. Interacts with DnaB. The cofactor is Zn(2+). Mg(2+) serves as cofactor.

The catalysed reaction is ssDNA + n NTP = ssDNA/pppN(pN)n-1 hybrid + (n-1) diphosphate.. In terms of biological role, RNA polymerase that catalyzes the synthesis of short RNA molecules used as primers for DNA polymerase during DNA replication. This is DNA primase from Thermotoga maritima (strain ATCC 43589 / DSM 3109 / JCM 10099 / NBRC 100826 / MSB8).